The sequence spans 190 residues: Threonylcarbamoyl-AMP synthase (190 aa).

Positions 8–190 (RFRIRQCAAR…DAESGAVIRA (183 aa)) constitute a YrdC-like domain.

The protein belongs to the SUA5 family. TsaC subfamily.

It localises to the cytoplasm. It carries out the reaction L-threonine + hydrogencarbonate + ATP = L-threonylcarbamoyladenylate + diphosphate + H2O. Required for the formation of a threonylcarbamoyl group on adenosine at position 37 (t(6)A37) in tRNAs that read codons beginning with adenine. Catalyzes the conversion of L-threonine, HCO(3)(-)/CO(2) and ATP to give threonylcarbamoyl-AMP (TC-AMP) as the acyladenylate intermediate, with the release of diphosphate. This Alkalilimnicola ehrlichii (strain ATCC BAA-1101 / DSM 17681 / MLHE-1) protein is Threonylcarbamoyl-AMP synthase.